Here is a 430-residue protein sequence, read N- to C-terminus: Replication factor C large subunit (430 aa).

75 to 82 contributes to the ATP binding site; it reads GPPGTGKT.

Belongs to the activator 1 small subunits family. RfcL subfamily. As to quaternary structure, heteromultimer composed of small subunits (RfcS) and large subunits (RfcL).

In terms of biological role, part of the RFC clamp loader complex which loads the PCNA sliding clamp onto DNA. The protein is Replication factor C large subunit of Nanoarchaeum equitans (strain Kin4-M).